The following is a 1016-amino-acid chain: Probable outer membrane protein PmpH (1016 aa).

An N-terminal signal peptide occupies residues Met1–Ala24. One can recognise an Autotransporter domain in the interval Gly697–Phe1016.

Belongs to the PMP outer membrane protein family.

It localises to the secreted. It is found in the cell wall. Its subcellular location is the cell outer membrane. The protein is Probable outer membrane protein PmpH (pmpH) of Chlamydia trachomatis serovar D (strain ATCC VR-885 / DSM 19411 / UW-3/Cx).